Here is a 295-residue protein sequence, read N- to C-terminus: Elongation factor Ts (295 aa).

Residues 79–82 are involved in Mg(2+) ion dislocation from EF-Tu; sequence TDFV.

Belongs to the EF-Ts family.

It is found in the cytoplasm. Associates with the EF-Tu.GDP complex and induces the exchange of GDP to GTP. It remains bound to the aminoacyl-tRNA.EF-Tu.GTP complex up to the GTP hydrolysis stage on the ribosome. This chain is Elongation factor Ts, found in Bacillus cytotoxicus (strain DSM 22905 / CIP 110041 / 391-98 / NVH 391-98).